Consider the following 561-residue polypeptide: Transmembrane protein 209 (561 aa).

Serine 9 and serine 11 each carry phosphoserine. Residues 28-48 (VVLAWGLLNVSMAGMIYTEMT) form a helical membrane-spanning segment. Asparagine 57 is a glycosylation site (N-linked (GlcNAc...) asparagine). Residues 60 to 80 (YWPLWYIELALASLFSLNALF) form a helical membrane-spanning segment. Serine 98 bears the Phosphoserine mark. 2 disordered regions span residues 119–157 (DLAA…FTTS) and 195–234 (FSPS…DKED). Residues 133–157 (SIQGQSVLSYSPSRSPSTSPKFTTS) show a composition bias toward low complexity. Phosphoserine occurs at positions 201, 222, and 248. Residues 220–229 (RSSPTVYNSP) show a composition bias toward polar residues. Positions 250–271 (EEKQHRVKLGSPDSTSPSSSPT) are disordered. The span at 260 to 271 (SPDSTSPSSSPT) shows a compositional bias: low complexity. Asparagine 274 is a glycosylation site (N-linked (GlcNAc...) asparagine). At serine 278 the chain carries Phosphoserine.

In terms of assembly, interacts with NUP205. As to expression, expressed in the testis.

The protein resides in the membrane. Its subcellular location is the nucleus envelope. It is found in the golgi apparatus. The protein localises to the cytoplasm. Nuclear envelope protein which in association with NUP205, may be involved in nuclear transport of various nuclear proteins in addition to MYC. This is Transmembrane protein 209 (TMEM209) from Homo sapiens (Human).